Here is a 142-residue protein sequence, read N- to C-terminus: Large ribosomal subunit protein uL13 (142 aa).

Belongs to the universal ribosomal protein uL13 family. In terms of assembly, part of the 50S ribosomal subunit.

Functionally, this protein is one of the early assembly proteins of the 50S ribosomal subunit, although it is not seen to bind rRNA by itself. It is important during the early stages of 50S assembly. The chain is Large ribosomal subunit protein uL13 from Helicobacter hepaticus (strain ATCC 51449 / 3B1).